Here is a 549-residue protein sequence, read N- to C-terminus: Cation/acetate symporter ActP (549 aa).

At 1 to 32 (MKRVLTALAATLPFAANAADAISGAVERQPTN) the chain is on the periplasmic side. The helical transmembrane segment at 33 to 55 (WQAIIMFLIFVVFTLGITYWASK) threads the bilayer. Topologically, residues 56 to 75 (RVRSRNDYYTAGGNITGFQN) are cytoplasmic. Residues 76–98 (GLAIAGDYMSAASFLGISALVFT) traverse the membrane as a helical segment. The Periplasmic segment spans residues 99-102 (SGYD). The chain crosses the membrane as a helical span at residues 103–125 (GLIYSLGFLVGWPIILFLIAERL). Residues 126–145 (RNLGRYTFADVASYRLKQGP) are Cytoplasmic-facing. A helical membrane pass occupies residues 146-168 (IRILSACGSLVVVALYLIAQMVG). The Periplasmic portion of the chain corresponds to 169–182 (AGKLIELLFGLNYH). Residues 183–205 (IAVVLVGVLMMMYVLFGGMLATT) form a helical membrane-spanning segment. At 206-211 (WVQIIK) the chain is on the cytoplasmic side. The helical transmembrane segment at 212–234 (AVLLLFGASFMAFMVMKHVGFSF) threads the bilayer. Topologically, residues 235 to 263 (NNLFSEAMAVHPKGVDIMKPGGLVKDPIS) are periplasmic. Residues 264-286 (ALSLGLGLMFGTAGLPHILMHFF) traverse the membrane as a helical segment. Residues 287–297 (TVSDAREARKS) lie on the Cytoplasmic side of the membrane. A helical membrane pass occupies residues 298–320 (VFYATGFMGYFYILTFIIGFGAI). The Periplasmic portion of the chain corresponds to 321–358 (MLVGANPEYKDAAGHLIGGNNMAAVHLANAVGGNLFLG). Residues 359-381 (FISAVAFATILAVVAGLTLAGAS) form a helical membrane-spanning segment. At 382-401 (AVSHDLYANVFKKGATEREE) the chain is on the cytoplasmic side. A helical transmembrane segment spans residues 402-424 (LRVSKITVLILGVIAIILGVLFE). At 425 to 427 (NQN) the chain is on the periplasmic side. Residues 428 to 450 (IAFMVGLAFAIAASCNFPIILLS) traverse the membrane as a helical segment. Over 451–461 (MYWSKLTTRGA) the chain is Cytoplasmic. A helical membrane pass occupies residues 462 to 484 (MLGGWLGLITAVVLMILGPTIWV). Residues 485–493 (QILGHEKAI) are Periplasmic-facing. The chain crosses the membrane as a helical span at residues 494–516 (FPYEYPALFSISVAFLGIWLFSA). Residues 517 to 549 (TDNSAEGARERELFRAQFIRSQTGFGVEQGRAH) are Cytoplasmic-facing.

Belongs to the sodium:solute symporter (SSF) (TC 2.A.21) family.

The protein localises to the cell inner membrane. Its function is as follows. Transports acetate. This chain is Cation/acetate symporter ActP (actP), found in Escherichia coli O6:H1 (strain CFT073 / ATCC 700928 / UPEC).